A 496-amino-acid chain; its full sequence is Maintenance of mitochondrial morphology protein 1 (496 aa).

The Lumenal portion of the chain corresponds to 1–22; the sequence is MSSQLNDPTPIPAQSSLSFTQG. Residues 23–43 traverse the membrane as a helical segment; the sequence is FLLGQLSVVLLIAAFIKFFIF. Residues 44 to 496 lie on the Cytoplasmic side of the membrane; that stretch reads GEAPPPPSRG…SLPGGGVTTT (453 aa). Disordered regions lie at residues 50-96, 276-331, 395-433, and 449-496; these read PSRG…VPSS, PLDT…KSNV, GRTG…SREP, and DLAS…VTTT. Residues 54–64 show a composition bias toward basic residues; the sequence is LSHRSATHRRS. Positions 65–74 are enriched in polar residues; it reads NSIYSSTQHD. The span at 75 to 84 shows a compositional bias: basic and acidic residues; the sequence is GNTRTLREKP. The segment covering 85–96 has biased composition (polar residues); that stretch reads SNSNVLRPVPSS. The region spanning 131–388 is the SMP-LTD domain; it reads QPESLDWFNV…EPRVQVVGLP (258 aa). Positions 276-287 are enriched in pro residues; sequence PLDTPSHSPSPP. The span at 407–418 shows a compositional bias: polar residues; sequence TGSNAPRSSTAA. 2 stretches are compositionally biased toward basic and acidic residues: residues 424–433 and 462–474; these read AHHEDSSREP and GDLR…REES.

Belongs to the MMM1 family. Homodimer. Component of the ER-mitochondria encounter structure (ERMES) or MDM complex, composed of mmm1, mdm10, mdm12 and mdm34. A mmm1 homodimer associates with one molecule of mdm12 on each side in a pairwise head-to-tail manner, and the SMP-LTD domains of mmm1 and mdm12 generate a continuous hydrophobic tunnel for phospholipid trafficking.

The protein localises to the endoplasmic reticulum membrane. In terms of biological role, component of the ERMES/MDM complex, which serves as a molecular tether to connect the endoplasmic reticulum (ER) and mitochondria. Components of this complex are involved in the control of mitochondrial shape and protein biogenesis, and function in nonvesicular lipid trafficking between the ER and mitochondria. The mdm12-mmm1 subcomplex functions in the major beta-barrel assembly pathway that is responsible for biogenesis of all outer membrane beta-barrel proteins, and acts in a late step after the SAM complex. The mdm10-mdm12-mmm1 subcomplex further acts in the TOM40-specific pathway after the action of the mdm12-mmm1 complex. Essential for establishing and maintaining the structure of mitochondria and maintenance of mtDNA nucleoids. In Neosartorya fischeri (strain ATCC 1020 / DSM 3700 / CBS 544.65 / FGSC A1164 / JCM 1740 / NRRL 181 / WB 181) (Aspergillus fischerianus), this protein is Maintenance of mitochondrial morphology protein 1.